The following is a 503-amino-acid chain: Lysine--tRNA ligase (503 aa).

Mg(2+)-binding residues include glutamate 414 and glutamate 421.

Belongs to the class-II aminoacyl-tRNA synthetase family. In terms of assembly, homodimer. Mg(2+) is required as a cofactor.

It localises to the cytoplasm. It catalyses the reaction tRNA(Lys) + L-lysine + ATP = L-lysyl-tRNA(Lys) + AMP + diphosphate. The polypeptide is Lysine--tRNA ligase (Neisseria meningitidis serogroup B (strain ATCC BAA-335 / MC58)).